The chain runs to 252 residues: Tumor necrosis factor ligand superfamily member 15 (252 aa).

Residues 1–39 lie on the Cytoplasmic side of the membrane; that stretch reads MAEELGLGFGEAVPVEMLPEGCRHRREARTGLAARSKAC. A helical; Signal-anchor for type II membrane protein transmembrane segment spans residues 40–60; that stretch reads LALTCCLLSFPILAGLSTLLM. At 61–252 the chain is on the extracellular side; it reads TGQLRIPGKD…DKTFFGAFLI (192 aa). Residues 96–252 form the THD domain; the sequence is PKAHLTIMRQ…DKTFFGAFLI (157 aa). An N-linked (GlcNAc...) asparagine glycan is attached at N134. An intrachain disulfide couples C163 to C203. N230 carries an N-linked (GlcNAc...) asparagine glycan.

Belongs to the tumor necrosis factor family. As to quaternary structure, homotrimer.

The protein localises to the membrane. Its function is as follows. Receptor for TNFRSF25 and TNFRSF6B. Mediates activation of NF-kappa-B. Inhibits vascular endothelial growth and angiogenesis (in vitro). Promotes activation of caspases and apoptosis. Promotes splenocyte alloactivation. The protein is Tumor necrosis factor ligand superfamily member 15 (Tnfsf15) of Rattus norvegicus (Rat).